A 187-amino-acid chain; its full sequence is MAIIVEDGSFITSSQWENVEASPKPPPRKPKIVQPKKKPSKHLSNEDALEKYEMLFGERRKEVELDYMSHIAEEETSLSMIEYDRHFALQTDVKLSKKRKSKLVEMTPKGLKKRKRVQIQEGSVSTNTKKRMDGHVVGSSAPAINNGKGKQLLEMMGWSRGKGLGSENQGMVDPVVAVVKNNKQGLH.

Disordered stretches follow at residues 15-46 and 119-145; these read QWEN…LSNE and IQEG…PAIN. The segment covering 26–41 has biased composition (basic residues); that stretch reads PPRKPKIVQPKKKPSK. Positions 145–187 constitute a G-patch domain; the sequence is NNGKGKQLLEMMGWSRGKGLGSENQGMVDPVVAVVKNNKQGLH.

Its subcellular location is the nucleus. The protein resides in the cytoplasm. The protein localises to the cytoskeleton. It is found in the microtubule organizing center. It localises to the spindle pole body. Its function is as follows. Has a role in meiosis and sporulation. Required for meiotic chromosome segregation. This is Meiotically up-regulated protein C1442.13c from Schizosaccharomyces pombe (strain 972 / ATCC 24843) (Fission yeast).